A 411-amino-acid polypeptide reads, in one-letter code: MRFIEEFINKGYFHQCTDLDRLTAITKETKIAAYIGFDCTATSLHIGSLMQIMILRLLQQHGHKPIVIIGGGTSKIGDPTWKDEVRKILSKEDIAKNAEGIKKSLSKFIKFGDGKSDAIMLDNAEWLDSFNYLDFLRDFGSYFSVNRMLTMDSVKLRLEREQHLSFLEFNYMLLQAYDFYYLSKHYNCSLQLGGSDQWGNIVMGADLIRKISGKEVFGMTTPLLTTSSGAKMGKTAAGAVWLNEDLLSPYDYYQYWRNCEDADIVRFAKLYSEFTQEELNRFESLAAEDINAAKKQLAYELTKLCHSEQAAKSALETAVKIFEEGQIDENLPTVVLEQEVLQAGISAYELFHEAGLATSKSEARKLIRGNGAKINDRLVADENMIINTNFLLDKKVIKLSAGKKRHILVRV.

Tyr34 is a binding site for L-tyrosine. Residues Cys39–Ser48 carry the 'HIGH' region motif. Positions 171 and 175 each coordinate L-tyrosine. The short motif at Lys231–Thr235 is the 'KMSKS' region element. Lys234 provides a ligand contact to ATP. Residues Ile345–Val411 form the S4 RNA-binding domain.

The protein belongs to the class-I aminoacyl-tRNA synthetase family. TyrS type 1 subfamily. Homodimer.

The protein resides in the cytoplasm. The enzyme catalyses tRNA(Tyr) + L-tyrosine + ATP = L-tyrosyl-tRNA(Tyr) + AMP + diphosphate + H(+). Its function is as follows. Catalyzes the attachment of tyrosine to tRNA(Tyr) in a two-step reaction: tyrosine is first activated by ATP to form Tyr-AMP and then transferred to the acceptor end of tRNA(Tyr). The protein is Tyrosine--tRNA ligase of Rickettsia peacockii (strain Rustic).